The primary structure comprises 97 residues: Co-chaperonin GroES (97 aa).

This sequence belongs to the GroES chaperonin family. Heptamer of 7 subunits arranged in a ring. Interacts with the chaperonin GroEL.

Its subcellular location is the cytoplasm. Together with the chaperonin GroEL, plays an essential role in assisting protein folding. The GroEL-GroES system forms a nano-cage that allows encapsulation of the non-native substrate proteins and provides a physical environment optimized to promote and accelerate protein folding. GroES binds to the apical surface of the GroEL ring, thereby capping the opening of the GroEL channel. The polypeptide is Co-chaperonin GroES (Pectobacterium carotovorum subsp. carotovorum (strain PC1)).